We begin with the raw amino-acid sequence, 252 residues long: Isoprenyl transferase (252 aa).

Asp32 is an active-site residue. Asp32 serves as a coordination point for Mg(2+). Substrate-binding positions include 33–36, Trp37, Arg45, His49, and 77–79; these read GNGR and STE. Asn80 acts as the Proton acceptor in catalysis. Substrate is bound by residues Trp81, Arg83, Arg200, and 206–208; that span reads RLS. Glu219 lines the Mg(2+) pocket.

Belongs to the UPP synthase family. As to quaternary structure, homodimer. It depends on Mg(2+) as a cofactor.

Functionally, catalyzes the condensation of isopentenyl diphosphate (IPP) with allylic pyrophosphates generating different type of terpenoids. The chain is Isoprenyl transferase from Listeria monocytogenes serotype 4b (strain F2365).